We begin with the raw amino-acid sequence, 228 residues long: ATP-dependent dethiobiotin synthetase BioD (228 aa).

12–17 (EIGKTT) provides a ligand contact to ATP. Residue threonine 16 coordinates Mg(2+). The active site involves lysine 37. A substrate-binding site is contributed by serine 41. Residues aspartate 54, 116–119 (EGAG), and 205–207 (PRL) contribute to the ATP site. Mg(2+) contacts are provided by aspartate 54 and glutamate 116.

Belongs to the dethiobiotin synthetase family. In terms of assembly, homodimer. Mg(2+) is required as a cofactor.

Its subcellular location is the cytoplasm. The enzyme catalyses (7R,8S)-7,8-diammoniononanoate + CO2 + ATP = (4R,5S)-dethiobiotin + ADP + phosphate + 3 H(+). Its pathway is cofactor biosynthesis; biotin biosynthesis; biotin from 7,8-diaminononanoate: step 1/2. In terms of biological role, catalyzes a mechanistically unusual reaction, the ATP-dependent insertion of CO2 between the N7 and N8 nitrogen atoms of 7,8-diaminopelargonic acid (DAPA, also called 7,8-diammoniononanoate) to form a ureido ring. The chain is ATP-dependent dethiobiotin synthetase BioD from Pseudomonas aeruginosa (strain LESB58).